The sequence spans 360 residues: Pyrimidine monooxygenase RutA (360 aa).

FMN contacts are provided by residues 49-50, Asn115, Glu124, 140-141, and Ser190; these read IK and RY.

It belongs to the NtaA/SnaA/DszA monooxygenase family. RutA subfamily.

The catalysed reaction is uracil + FMNH2 + NADH + O2 = (Z)-3-ureidoacrylate + FMN + NAD(+) + H2O + H(+). It carries out the reaction thymine + FMNH2 + NADH + O2 = (Z)-2-methylureidoacrylate + FMN + NAD(+) + H2O + H(+). Functionally, catalyzes the pyrimidine ring opening between N-3 and C-4 by an unusual flavin hydroperoxide-catalyzed mechanism, adding oxygen atoms in the process to yield ureidoacrylate peracid, that immediately reacts with FMN forming ureidoacrylate and FMN-N(5)-oxide. The FMN-N(5)-oxide reacts spontaneously with NADH to produce FMN. Requires the flavin reductase RutF to regenerate FMN in vivo. In Bradyrhizobium sp. (strain BTAi1 / ATCC BAA-1182), this protein is Pyrimidine monooxygenase RutA.